Reading from the N-terminus, the 268-residue chain is Energy-coupling factor transporter transmembrane protein EcfT (268 aa).

5 consecutive transmembrane segments (helical) span residues 26–46, 72–92, 106–126, 149–169, and 247–267; these read IVTF…TYAW, IFWL…GTPI, ILNA…STIL, IGVP…FVPL, and VAFA…TWLH.

It belongs to the energy-coupling factor EcfT family. Forms a stable energy-coupling factor (ECF) transporter complex composed of 2 membrane-embedded substrate-binding proteins (S component), 2 ATP-binding proteins (A component) and 2 transmembrane proteins (T component). May be able to interact with more than 1 S component at a time.

Its subcellular location is the cell membrane. Transmembrane (T) component of an energy-coupling factor (ECF) ABC-transporter complex. Unlike classic ABC transporters this ECF transporter provides the energy necessary to transport a number of different substrates. This chain is Energy-coupling factor transporter transmembrane protein EcfT, found in Leuconostoc gelidum subsp. gasicomitatum (strain DSM 15947 / CCUG 46042 / CECT 5767 / JCM 12535 / LMG 18811 / NBRC 113245 / TB1-10) (Leuconostoc gasicomitatum).